A 628-amino-acid chain; its full sequence is MTRRGGSDAAWYSAPDQRSAYPRYRGMRYSSCYVTMRDGVRIAIDLYLPAGLTSAARLPAILHQTRYYRSLQLRWPLRMLLGGKPLQHIAADKRRRRRFVASGYAWVDVDVRGSGASFGARVCEWSSDEIRDGAEIVDWIVRQPWCNGTVAALGNSYDGTSAELLLVNQHPAVRVIAPCFSLFDVYTDIAFPGGIHAAWFTDTWGRYNEALDRNALHEVVGWWAKLPVTGMQPVQEDRDRSLRDGAIAAHRGNYDVHQIAGSLTFRDDVSASDPYRGQPDARLEPIGTPIESGSINLISPHNYWRDVQASGAAIYSYSGWFDGGYAHAAIKRFLTVSTPGSHLILGPWNHTGGWRVDPLRGLSRPDFDHDGELLRFIDHHVKGADTGIGSEPPVHYFTMVENRWKSADTWPPPATTQSYYLSADRQLRPDAPDCDSGADEYVVDQTAGTGERSRWRSQVGIGGHVCYPDRKAQDAKLLTYTSAPLDHPLEVTGHVVVTLFITSTSSDGTFFVYLEDVDPRGRVAYITEGQLRAIHRRLSDGPPPYRQVVPYRTFASGDAWPLVPGEIARLTFDLLPTSYLFQPGHRIRIAIAGADASHFAILPGCAPTVRVYRSRMHASRIDLPVIQP.

The Acyl-ester intermediate role is filled by serine 156. Catalysis depends on charge relay system residues aspartate 322 and histidine 350.

Belongs to the CocE/NonD hydrolase family.

The protein is Putative serine esterase Mb1866c of Mycobacterium bovis (strain ATCC BAA-935 / AF2122/97).